We begin with the raw amino-acid sequence, 97 residues long: Putative septation protein SpoVG (97 aa).

It belongs to the SpoVG family.

In terms of biological role, essential for sporulation. Interferes with or is a negative regulator of the pathway leading to asymmetric septation. This is Putative septation protein SpoVG from Bacillus cytotoxicus (strain DSM 22905 / CIP 110041 / 391-98 / NVH 391-98).